Here is a 332-residue protein sequence, read N- to C-terminus: tRNA uridine(34) hydroxylase (332 aa).

Residues 127–221 (SDPETVLIDT…YLEEVPKEKS (95 aa)) form the Rhodanese domain. Residue Cys-181 is the Cysteine persulfide intermediate of the active site. The segment at 308 to 332 (AKKLAQLNKQKKQQAKEAARKKAQQ) is disordered. The segment covering 321–332 (QAKEAARKKAQQ) has biased composition (basic and acidic residues).

This sequence belongs to the TrhO family.

The enzyme catalyses uridine(34) in tRNA + AH2 + O2 = 5-hydroxyuridine(34) in tRNA + A + H2O. Its function is as follows. Catalyzes oxygen-dependent 5-hydroxyuridine (ho5U) modification at position 34 in tRNAs. This Francisella tularensis subsp. tularensis (strain FSC 198) protein is tRNA uridine(34) hydroxylase.